A 141-amino-acid chain; its full sequence is D-aminoacyl-tRNA deacylase (141 aa).

The Gly-cisPro motif, important for rejection of L-amino acids signature appears at G133 to P134.

The protein belongs to the DTD family. As to quaternary structure, homodimer.

The protein localises to the cytoplasm. The catalysed reaction is glycyl-tRNA(Ala) + H2O = tRNA(Ala) + glycine + H(+). It catalyses the reaction a D-aminoacyl-tRNA + H2O = a tRNA + a D-alpha-amino acid + H(+). Functionally, an aminoacyl-tRNA editing enzyme that deacylates mischarged D-aminoacyl-tRNAs. Also deacylates mischarged glycyl-tRNA(Ala), protecting cells against glycine mischarging by AlaRS. Acts via tRNA-based rather than protein-based catalysis; rejects L-amino acids rather than detecting D-amino acids in the active site. By recycling D-aminoacyl-tRNA to D-amino acids and free tRNA molecules, this enzyme counteracts the toxicity associated with the formation of D-aminoacyl-tRNA entities in vivo and helps enforce protein L-homochirality. This chain is D-aminoacyl-tRNA deacylase, found in Beutenbergia cavernae (strain ATCC BAA-8 / DSM 12333 / CCUG 43141 / JCM 11478 / NBRC 16432 / NCIMB 13614 / HKI 0122).